A 373-amino-acid polypeptide reads, in one-letter code: Dimethylallyltryptophan synthase CymD (373 aa).

Positions 55, 56, and 64 each coordinate L-tryptophan. The Nucleophile role is filled by Glu64. Dimethylallyl diphosphate contacts are provided by Gln77, Lys146, Trp148, Arg205, and Lys207. Residue Arg211 coordinates L-tryptophan. Residue Tyr274 coordinates dimethylallyl diphosphate. Residue Tyr326 coordinates L-tryptophan. Residues Arg337, Lys339, and Tyr341 each coordinate dimethylallyl diphosphate. The 28-residue stretch at 346–373 (MHDVTPPPLGVSQQHHLSGQTTARGRTE) folds into the FtsK domain.

Dimethylallyltryptophan synthase; part of the gene cluster that mediates the biosynthesis of cyclic heptapeptides, known as cyclomarins and also of cyclic dipeptides, called cyclomarazines, which have both antimicrobial and cytotoxic effects. Catalyzes the reverse N-prenylation of monomeric L-tryptophan with dimethylallyl diphosphate (DMAPP) to form N-(1,1-dimethylallyl)-tryptophan (r-N-DMAT). The formation of r-N-DMAT appears to proceed via the deprotonation of the indole nitrogen of tryptophan, which facilitates a nucleophilic attack on the carbocation that is forming on the dimethylallyl group as the diphosphate dissociates. The N-(1,1-dimethylallyl)-tryptophan produced by CymD is combined with a range of standard and nonproteinogenic amino acid substrates to synthesize the peptides, a process that is probably catalyzed by the non-canonical nonribosomal peptide synthetase (NRPS), CymA. Other proteins in the cluster catalyze further modifications of the peptides including CymV which catalyzes the oxidation of olefinic cyclomarins and cyclomarazines to their respective epoxide derivatives. Utilizes only DMAPP as the prenyl donor and has no requirement for divalent cations. The polypeptide is Dimethylallyltryptophan synthase CymD (Salinispora arenicola (strain CNS-205)).